Consider the following 139-residue polypeptide: Putative nickel-responsive regulator (139 aa).

The Ni(2+) site is built by histidine 79, histidine 90, histidine 92, and cysteine 98.

Belongs to the transcriptional regulatory CopG/NikR family. Requires Ni(2+) as cofactor.

Transcriptional regulator. The chain is Putative nickel-responsive regulator from Geobacter metallireducens (strain ATCC 53774 / DSM 7210 / GS-15).